A 354-amino-acid polypeptide reads, in one-letter code: Probable L-ascorbate-6-phosphate lactonase UlaG (354 aa).

The protein belongs to the UlaG family. Requires a divalent metal cation as cofactor.

It is found in the cytoplasm. It catalyses the reaction L-ascorbate 6-phosphate + H2O = 3-dehydro-L-gulonate 6-phosphate. It participates in cofactor degradation; L-ascorbate degradation; D-xylulose 5-phosphate from L-ascorbate: step 1/4. Functionally, probably catalyzes the hydrolysis of L-ascorbate-6-P into 3-keto-L-gulonate-6-P. Is essential for L-ascorbate utilization under anaerobic conditions. This Escherichia coli O45:K1 (strain S88 / ExPEC) protein is Probable L-ascorbate-6-phosphate lactonase UlaG.